The primary structure comprises 448 residues: Trigger factor (448 aa).

Residues 172–257 enclose the PPIase FKBP-type domain; it reads GDRVTVDFVG…MKKIEWPHLP (86 aa).

The protein belongs to the FKBP-type PPIase family. Tig subfamily.

The protein resides in the cytoplasm. The catalysed reaction is [protein]-peptidylproline (omega=180) = [protein]-peptidylproline (omega=0). Functionally, involved in protein export. Acts as a chaperone by maintaining the newly synthesized protein in an open conformation. Functions as a peptidyl-prolyl cis-trans isomerase. The polypeptide is Trigger factor (Burkholderia orbicola (strain MC0-3)).